Here is a 389-residue protein sequence, read N- to C-terminus: GTPase Obg (389 aa).

The region spanning 1-159 (MKFVDEAVIK…RELRLELLLL (159 aa)) is the Obg domain. Positions 160 to 333 (ADVGMLGLPN…LCYKLADFME (174 aa)) constitute an OBG-type G domain. GTP is bound by residues 166 to 173 (GLPNAGKS), 191 to 195 (FTTLI), 213 to 216 (DIPG), 283 to 286 (NKVD), and 314 to 316 (SAV). Positions 173 and 193 each coordinate Mg(2+). Positions 359 to 389 (NQGEVITEDDDDDWDDWDDEEDDGHVIYVRE) are disordered. Over residues 364–381 (ITEDDDDDWDDWDDEEDD) the composition is skewed to acidic residues.

Belongs to the TRAFAC class OBG-HflX-like GTPase superfamily. OBG GTPase family. In terms of assembly, monomer. It depends on Mg(2+) as a cofactor.

The protein localises to the cytoplasm. An essential GTPase which binds GTP, GDP and possibly (p)ppGpp with moderate affinity, with high nucleotide exchange rates and a fairly low GTP hydrolysis rate. Plays a role in control of the cell cycle, stress response, ribosome biogenesis and in those bacteria that undergo differentiation, in morphogenesis control. This chain is GTPase Obg, found in Vibrio vulnificus (strain CMCP6).